A 696-amino-acid chain; its full sequence is Polyphosphate kinase (696 aa).

N45 serves as a coordination point for ATP. Positions 373 and 403 each coordinate Mg(2+). Residues 428 to 462 (PGLKIHSKLLMISRREGDDIIRYAHIGTGNFHEKT) form the PLD phosphodiesterase domain. H433 (phosphohistidine intermediate) is an active-site residue. The ATP site is built by Y466, R562, and H590.

The protein belongs to the polyphosphate kinase 1 (PPK1) family. It depends on Mg(2+) as a cofactor. An intermediate of this reaction is the autophosphorylated ppk in which a phosphate is covalently linked to a histidine residue through a N-P bond.

The catalysed reaction is [phosphate](n) + ATP = [phosphate](n+1) + ADP. Catalyzes the reversible transfer of the terminal phosphate of ATP to form a long-chain polyphosphate (polyP). This Vibrio parahaemolyticus serotype O3:K6 (strain RIMD 2210633) protein is Polyphosphate kinase.